The chain runs to 246 residues: MKLLSKLILTLALATYASASESFRYINWDNPPHDVTFYEGDVLQFTTNEGRNSTITLISDTENGDKSFDGVLNEDQRSFVQKALPPGRYTFKDLNSGSKSIIRVKESKELAKEVRPIDRLKDNADAANTENAQKSPNTQSTQKGSPKSDAKEASPKTDAKEASPKSDAKEASPKTDTKQGSSPKTDTKSSTQKPSSSSDSSKAKAEANTAANNEEAEHVEKGASNTLKASLSIISAACVLSLGYLL.

The first 19 residues, 1–19 (MKLLSKLILTLALATYASA), serve as a signal peptide directing secretion. N-linked (GlcNAc...) asparagine glycosylation is present at asparagine 52. The segment covering 113–124 (EVRPIDRLKDNA) has biased composition (basic and acidic residues). Residues 113 to 223 (EVRPIDRLKD…EEAEHVEKGA (111 aa)) form a disordered region. Residues 126 to 145 (AANTENAQKSPNTQSTQKGS) show a composition bias toward polar residues. 3 repeat units span residues 145 to 153 (SPKSDAKEA), 154 to 162 (SPKTDAKEA), and 163 to 171 (SPKSDAKEA). The interval 145–176 (SPKSDAKEASPKTDAKEASPKSDAKEASPKTD) is 3.5 X 9 AA tandem repeats of S-P-K-[ST]-D-A-K-E-A. The segment covering 146–177 (PKSDAKEASPKTDAKEASPKSDAKEASPKTDT) has biased composition (basic and acidic residues). One copy of the 4; truncated repeat lies at 172-176 (SPKTD). Residues 181–213 (SSPKTDTKSSTQKPSSSSDSSKAKAEANTAANN) are compositionally biased toward low complexity.

The sequence is that of Protein 3F (pspG) from Dictyostelium discoideum (Social amoeba).